The sequence spans 104 residues: UPF0235 protein MTH_637 (104 aa).

It belongs to the UPF0235 family.

The sequence is that of UPF0235 protein MTH_637 from Methanothermobacter thermautotrophicus (strain ATCC 29096 / DSM 1053 / JCM 10044 / NBRC 100330 / Delta H) (Methanobacterium thermoautotrophicum).